The sequence spans 92 residues: MAYRGQGQKVQKVMVQPINLIFRYLQNRSRIQVWLYEQVNMRIEGCIIGFDEYMNLVLDDAEEIHSKTKSRKQLGRIMLKGDNITLLQSVSN.

The 75-residue stretch at 18-92 folds into the Sm domain; it reads INLIFRYLQN…NITLLQSVSN (75 aa).

The protein belongs to the snRNP Sm proteins family. Core component of the spliceosomal U1, U2, U4 and U5 small nuclear ribonucleoproteins (snRNPs), the building blocks of the spliceosome. Most spliceosomal snRNPs contain a common set of Sm proteins, SNRPB, SNRPD1, SNRPD2, SNRPD3, SNRPE, SNRPF and SNRPG that assemble in a heptameric protein ring on the Sm site of the small nuclear RNA to form the core snRNP. Component of the U1 snRNP. The U1 snRNP is composed of the U1 snRNA and the 7 core Sm proteins SNRPB, SNRPD1, SNRPD2, SNRPD3, SNRPE, SNRPF and SNRPG, and at least three U1 snRNP-specific proteins SNRNP70/U1-70K, SNRPA/U1-A and SNRPC/U1-C. Component of the U4/U6-U5 tri-snRNP complex composed of the U4, U6 and U5 snRNAs and at least PRPF3, PRPF4, PRPF6, PRPF8, PRPF31, SNRNP200, TXNL4A, SNRNP40, SNRPB, SNRPD1, SNRPD2, SNRPD3, SNRPE, SNRPF, SNRPG, DDX23, CD2BP2, PPIH, SNU13, EFTUD2, SART1 and USP39, plus LSM2, LSM3, LSM4, LSM5, LSM6, LSM7 and LSM8. Component of the U7 snRNP complex, or U7 Sm protein core complex, that is composed of the U7 snRNA and at least LSM10, LSM11, SNRPB, SNRPD3, SNRPE, SNRPF and SNRPG; the complex does not contain SNRPD1 and SNRPD2. Component of the minor spliceosome, which splices U12-type introns. Part of the SMN-Sm complex that contains SMN1, GEMIN2/SIP1, DDX20/GEMIN3, GEMIN4, GEMIN5, GEMIN6, GEMIN7, GEMIN8, STRAP/UNRIP and the Sm proteins SNRPB, SNRPD1, SNRPD2, SNRPD3, SNRPE, SNRPF and SNRPG; catalyzes core snRNPs assembly. Forms a 6S pICln-Sm complex composed of CLNS1A/pICln, SNRPD1, SNRPD2, SNRPE, SNRPF and SNRPG; ring-like structure where CLNS1A/pICln mimics additional Sm proteins and which is unable to assemble into the core snRNP. Interacts with SMN1; the interaction is direct. Interacts with GEMIN2 (via N-terminus); the interaction is direct. Interacts with SNRPF; the interaction is direct. Interacts with SNRPG; the interaction is direct.

The protein localises to the cytoplasm. It localises to the cytosol. It is found in the nucleus. Functionally, plays a role in pre-mRNA splicing as a core component of the spliceosomal U1, U2, U4 and U5 small nuclear ribonucleoproteins (snRNPs), the building blocks of the spliceosome. Component of both the pre-catalytic spliceosome B complex and activated spliceosome C complexes. As a component of the minor spliceosome, involved in the splicing of U12-type introns in pre-mRNAs. As part of the U7 snRNP it is involved in histone 3'-end processing. The protein is Small nuclear ribonucleoprotein E (SNRPE) of Bos taurus (Bovine).